Here is a 458-residue protein sequence, read N- to C-terminus: UDP-glycosyltransferase 76G1 (458 aa).

The Proton acceptor role is filled by histidine 25. Histidine 25 provides a ligand contact to rebaudioside A. Residue histidine 25 participates in rubusoside binding. Asparagine 27 serves as a coordination point for UDP. The active-site Charge relay is the aspartate 124. Rebaudioside A contacts are provided by residues threonine 146–serine 147 and histidine 155. Residues serine 283, tryptophan 338–valine 339, and histidine 356–glutamate 364 contribute to the UDP site. Rebaudioside A contacts are provided by residues tryptophan 359 and aspartate 380–glutamine 381.

It belongs to the UDP-glycosyltransferase family. Monomer.

The catalysed reaction is steviolbioside + UDP-alpha-D-glucose = rebaudioside B + UDP + H(+). It catalyses the reaction stevioside + UDP-alpha-D-glucose = rebaudioside A + UDP + H(+). It carries out the reaction rebaudioside E + UDP-alpha-D-glucose = rebaudioside D + UDP + H(+). The enzyme catalyses rebaudioside D + UDP-alpha-D-glucose = rebaudioside M + UDP + H(+). Its function is as follows. Involved in the biosynthesis of steviol glycosides in leaves. Converts the di-glycoside steviolbioside to the tri-glycoside rebaudioside B. Converts the tri-glycoside stevioside to the tetra-glycoside rebaudioside A. Converts the tetra-glycoside rebaudioside E to the penta-glycoside rebaudioside D. Converts the penta-glycoside rebaudioside D to the hexa-glycoside rebaudioside M. Can glucosylate rubusoside and rebaudioside A in vitro. This chain is UDP-glycosyltransferase 76G1, found in Stevia rebaudiana (Stevia).